The following is a 356-amino-acid chain: Peptide chain release factor 1 (356 aa).

Residue Gln-233 is modified to N5-methylglutamine.

Belongs to the prokaryotic/mitochondrial release factor family. In terms of processing, methylated by PrmC. Methylation increases the termination efficiency of RF1.

The protein resides in the cytoplasm. Its function is as follows. Peptide chain release factor 1 directs the termination of translation in response to the peptide chain termination codons UAG and UAA. The sequence is that of Peptide chain release factor 1 from Bacillus licheniformis (strain ATCC 14580 / DSM 13 / JCM 2505 / CCUG 7422 / NBRC 12200 / NCIMB 9375 / NCTC 10341 / NRRL NRS-1264 / Gibson 46).